Consider the following 156-residue polypeptide: Large ribosomal subunit protein uL15 (156 aa).

Residues 1-56 (MDLSNLKPAEGATQAGQRLGRGEGSGRGGHSSTRGTKGQSSRSGSGTRPIWFEGGQ) form a disordered region.

This sequence belongs to the universal ribosomal protein uL15 family. As to quaternary structure, part of the 50S ribosomal subunit.

Functionally, binds to the 23S rRNA. The polypeptide is Large ribosomal subunit protein uL15 (Salinibacter ruber (strain DSM 13855 / M31)).